A 254-amino-acid chain; its full sequence is Cell division protein ZapD (254 aa).

This sequence belongs to the ZapD family. As to quaternary structure, interacts with FtsZ.

Its subcellular location is the cytoplasm. Cell division factor that enhances FtsZ-ring assembly. Directly interacts with FtsZ and promotes bundling of FtsZ protofilaments, with a reduction in FtsZ GTPase activity. This is Cell division protein ZapD from Idiomarina loihiensis (strain ATCC BAA-735 / DSM 15497 / L2-TR).